The sequence spans 171 residues: Photosystem I reaction center subunit N, chloroplastic (171 aa).

The transit peptide at 1–49 directs the protein to the chloroplast; that stretch reads MAAMNSSVLTCSYAIAGSGSVELNQKVGLVNSSVGFGQKKQMIMPVIKA. A thylakoid-targeting transit peptide spans 50-86; it reads QRVVGDDVDGSNGRRSAMVFLAATLFSTAAVSASANA. Gly87 carries the post-translational modification N-acetylglycine; partial.

This sequence belongs to the psaN family. As to quaternary structure, interacts with GRF5, GRF7, GRF9 and GRF10. The transit peptide is the site of PSAN that associates with 14-3-3.

Its subcellular location is the plastid. The protein resides in the chloroplast thylakoid membrane. In terms of biological role, may function in mediating the binding of the antenna complexes to the PSI reaction center and core antenna. Plays an important role in docking plastocyanin to the PSI complex. Does not bind pigments. This chain is Photosystem I reaction center subunit N, chloroplastic (PSAN), found in Arabidopsis thaliana (Mouse-ear cress).